Here is an 89-residue protein sequence, read N- to C-terminus: Small ribosomal subunit protein uS15 (89 aa).

This sequence belongs to the universal ribosomal protein uS15 family. Part of the 30S ribosomal subunit. Forms a bridge to the 50S subunit in the 70S ribosome, contacting the 23S rRNA.

One of the primary rRNA binding proteins, it binds directly to 16S rRNA where it helps nucleate assembly of the platform of the 30S subunit by binding and bridging several RNA helices of the 16S rRNA. Its function is as follows. Forms an intersubunit bridge (bridge B4) with the 23S rRNA of the 50S subunit in the ribosome. This chain is Small ribosomal subunit protein uS15, found in Pseudomonas putida (Arthrobacter siderocapsulatus).